We begin with the raw amino-acid sequence, 445 residues long: UPF0210 protein STER_0157 (445 aa).

It belongs to the UPF0210 family. As to quaternary structure, homodimer.

This chain is UPF0210 protein STER_0157, found in Streptococcus thermophilus (strain ATCC BAA-491 / LMD-9).